A 414-amino-acid polypeptide reads, in one-letter code: Histidine--tRNA ligase (414 aa).

This sequence belongs to the class-II aminoacyl-tRNA synthetase family. Homodimer.

Its subcellular location is the cytoplasm. It carries out the reaction tRNA(His) + L-histidine + ATP = L-histidyl-tRNA(His) + AMP + diphosphate + H(+). The polypeptide is Histidine--tRNA ligase (hisS) (Mycoplasma pneumoniae (strain ATCC 29342 / M129 / Subtype 1) (Mycoplasmoides pneumoniae)).